A 531-amino-acid polypeptide reads, in one-letter code: NADH-quinone oxidoreductase subunit N (531 aa).

A run of 13 helical transmembrane segments spans residues 13-33 (LAPI…EAFA), 45-65 (LALL…AEVI), 85-105 (PALA…LVIA), 150-170 (LFSV…TLFI), 200-220 (YFLL…LLYG), 242-262 (GLLV…VGAV), 289-309 (VAAF…MTWD), 310-330 (IQPF…VLAI), 339-359 (LAYS…AMSP), 365-385 (VFFY…LVAL), 415-435 (VATV…TSGF), 460-480 (ASAA…FTSP), and 496-516 (GFTA…GVWP).

Belongs to the complex I subunit 2 family. As to quaternary structure, NDH-1 is composed of 14 different subunits. Subunits NuoA, H, J, K, L, M, N constitute the membrane sector of the complex.

It is found in the cell membrane. The catalysed reaction is a quinone + NADH + 5 H(+)(in) = a quinol + NAD(+) + 4 H(+)(out). Functionally, NDH-1 shuttles electrons from NADH, via FMN and iron-sulfur (Fe-S) centers, to quinones in the respiratory chain. The immediate electron acceptor for the enzyme in this species is believed to be a menaquinone. Couples the redox reaction to proton translocation (for every two electrons transferred, four hydrogen ions are translocated across the cytoplasmic membrane), and thus conserves the redox energy in a proton gradient. This Beutenbergia cavernae (strain ATCC BAA-8 / DSM 12333 / CCUG 43141 / JCM 11478 / NBRC 16432 / NCIMB 13614 / HKI 0122) protein is NADH-quinone oxidoreductase subunit N.